The following is a 557-amino-acid chain: 2-succinyl-5-enolpyruvyl-6-hydroxy-3-cyclohexene-1-carboxylate synthase (557 aa).

This sequence belongs to the TPP enzyme family. MenD subfamily. Homodimer. Mg(2+) serves as cofactor. Requires Mn(2+) as cofactor. Thiamine diphosphate is required as a cofactor.

The catalysed reaction is isochorismate + 2-oxoglutarate + H(+) = 5-enolpyruvoyl-6-hydroxy-2-succinyl-cyclohex-3-ene-1-carboxylate + CO2. The protein operates within quinol/quinone metabolism; 1,4-dihydroxy-2-naphthoate biosynthesis; 1,4-dihydroxy-2-naphthoate from chorismate: step 2/7. Its pathway is quinol/quinone metabolism; menaquinone biosynthesis. Functionally, catalyzes the thiamine diphosphate-dependent decarboxylation of 2-oxoglutarate and the subsequent addition of the resulting succinic semialdehyde-thiamine pyrophosphate anion to isochorismate to yield 2-succinyl-5-enolpyruvyl-6-hydroxy-3-cyclohexene-1-carboxylate (SEPHCHC). The chain is 2-succinyl-5-enolpyruvyl-6-hydroxy-3-cyclohexene-1-carboxylate synthase from Staphylococcus aureus (strain bovine RF122 / ET3-1).